Consider the following 253-residue polypeptide: NAD(P)H-quinone oxidoreductase subunit K (253 aa).

[4Fe-4S] cluster contacts are provided by C68, C69, C133, and C164.

The protein belongs to the complex I 20 kDa subunit family. In terms of assembly, NDH-1 can be composed of about 15 different subunits; different subcomplexes with different compositions have been identified which probably have different functions. The cofactor is [4Fe-4S] cluster.

The protein localises to the cellular thylakoid membrane. It catalyses the reaction a plastoquinone + NADH + (n+1) H(+)(in) = a plastoquinol + NAD(+) + n H(+)(out). The catalysed reaction is a plastoquinone + NADPH + (n+1) H(+)(in) = a plastoquinol + NADP(+) + n H(+)(out). NDH-1 shuttles electrons from an unknown electron donor, via FMN and iron-sulfur (Fe-S) centers, to quinones in the respiratory and/or the photosynthetic chain. The immediate electron acceptor for the enzyme in this species is believed to be plastoquinone. Couples the redox reaction to proton translocation, and thus conserves the redox energy in a proton gradient. Cyanobacterial NDH-1 also plays a role in inorganic carbon-concentration. The polypeptide is NAD(P)H-quinone oxidoreductase subunit K (Synechococcus sp. (strain CC9311)).